A 308-amino-acid polypeptide reads, in one-letter code: Sulfate adenylyltransferase subunit 2 (308 aa).

A disordered region spans residues 286-308; it reads RQGRIIDHDGSASMEKKKQEGYF.

This sequence belongs to the PAPS reductase family. CysD subfamily. As to quaternary structure, heterodimer composed of CysD, the smaller subunit, and CysN.

The enzyme catalyses sulfate + ATP + H(+) = adenosine 5'-phosphosulfate + diphosphate. It functions in the pathway sulfur metabolism; hydrogen sulfide biosynthesis; sulfite from sulfate: step 1/3. Its function is as follows. With CysN forms the ATP sulfurylase (ATPS) that catalyzes the adenylation of sulfate producing adenosine 5'-phosphosulfate (APS) and diphosphate, the first enzymatic step in sulfur assimilation pathway. APS synthesis involves the formation of a high-energy phosphoric-sulfuric acid anhydride bond driven by GTP hydrolysis by CysN coupled to ATP hydrolysis by CysD. The chain is Sulfate adenylyltransferase subunit 2 from Nocardia farcinica (strain IFM 10152).